Consider the following 846-residue polypeptide: Aminopeptidase N (846 aa).

Substrate-binding positions include Glu-120 and 252 to 256; that span reads GAMEN. A Zn(2+)-binding site is contributed by His-288. The active-site Proton acceptor is the Glu-289. Zn(2+) contacts are provided by His-292 and Glu-311.

The protein belongs to the peptidase M1 family. In terms of assembly, monomer. It depends on Zn(2+) as a cofactor.

Its subcellular location is the cytoplasm. The enzyme catalyses Release of an N-terminal amino acid, Xaa-|-Yaa- from a peptide, amide or arylamide. Xaa is preferably Ala, but may be most amino acids including Pro (slow action). When a terminal hydrophobic residue is followed by a prolyl residue, the two may be released as an intact Xaa-Pro dipeptide.. In terms of biological role, aminopeptidase with broad substrate specificity to several peptides. It has more affinity for oligopeptides than for dipeptides. It plays an essential role in the metabolism, it may be involved in nitrogen supply or protein turnover. This Lactococcus lactis subsp. cremoris (Streptococcus cremoris) protein is Aminopeptidase N (pepN).